The sequence spans 86 residues: Collagen alpha-1(XII) chain (86 aa).

The segment covering 1 to 12 (NQPGPPGPPGPP) has biased composition (pro residues). The disordered stretch occupies residues 1 to 86 (NQPGPPGPPG…PGRPGDSGIR (86 aa)). Pro6, Pro9, Pro12, Pro18, Pro24, Pro27, Pro30, Pro42, Pro51, Pro54, Pro65, Pro74, Pro77, and Pro80 each carry hydroxyproline. Residues 16–25 (GEPGPGGRPG) are compositionally biased toward gly residues. The segment covering 35-50 (PQGERGLPGEXGERGL) has biased composition (low complexity). Over residues 57–71 (QGESRTGPPGSTGSR) the composition is skewed to low complexity.

Belongs to the fibril-associated collagens with interrupted helices (FACIT) family. As to quaternary structure, trimer of identical chains each containing 190 kDa of non-triple-helical sequences. The triple-helical tail is stabilized by disulfide bonds at each end. Post-translationally, prolines at the third position of the tripeptide repeating unit (G-X-Y) are hydroxylated in some or all of the chains.

It localises to the secreted. The protein resides in the extracellular space. The protein localises to the extracellular matrix. Its function is as follows. Type XII collagen interacts with type I collagen-containing fibrils, the COL1 domain could be associated with the surface of the fibrils, and the COL2 and NC3 domains may be localized in the perifibrillar matrix. This is Collagen alpha-1(XII) chain (COL12A1) from Bos taurus (Bovine).